The following is a 350-amino-acid chain: MIRVAVIGGSGYTGGELLRLLAMHNKVEVTYITSREYAGKPISIIHPNLRGFYNINFSQFSWDKIGEKAEAVFLALPHKVSVDYVPKLLEMGLQVVDLSADFRLKNPELYKLWYEFDHPYPDLLKKAVYGIPEIHYEELKGAKLIASPGCNSTATILAAAPLVYSNILDNYRLISDVKVGSSEGGAKPSEGSHHPERQNAIRPYEAEGHRHAAEVEQELQYISKKEVKISLVPHAVSTIRGALASVHGWLISDDLNEIEFWKKIIEFYRGRKFVRVIRGNIHPYPDPKYVIGSNFVDIGFAVEKRVGRITMFSAIDNLMKGAAGQAVQAFNVSRGFEEDEGLRIPPLRPA.

NADP(+) is bound at residue 10 to 13; it reads SGYT. The active site involves Cys150. Asn317 contacts NADP(+).

The protein belongs to the NAGSA dehydrogenase family. Type 1 subfamily. LysY sub-subfamily.

It localises to the cytoplasm. The catalysed reaction is [amino-group carrier protein]-C-terminal-N-(1-carboxy-5-oxopentan-1-yl)-L-glutamine + phosphate + NADP(+) = [amino-group carrier protein]-C-terminal-N-(1-carboxy-5-phosphooxy-5-oxopentan-1-yl)-L-glutamine + NADPH + H(+). It carries out the reaction [amino-group carrier protein]-C-terminal-gamma-(L-glutamyl-5-semialdehyde)-L-glutamate + phosphate + NADP(+) = [amino-group carrier protein]-C-terminal-gamma-(5-phospho-L-glutamyl)-L-glutamate + NADPH + H(+). The protein operates within amino-acid biosynthesis; L-lysine biosynthesis via AAA pathway; L-lysine from L-alpha-aminoadipate (Thermus route): step 3/5. It functions in the pathway amino-acid biosynthesis; L-arginine biosynthesis. Functionally, involved in both the arginine and lysine biosynthetic pathways. This chain is [LysW]-L-2-aminoadipate/[LysW]-L-glutamate phosphate reductase, found in Sulfolobus acidocaldarius (strain ATCC 33909 / DSM 639 / JCM 8929 / NBRC 15157 / NCIMB 11770).